The following is a 181-amino-acid chain: Inner membrane-spanning protein YciB (181 aa).

5 consecutive transmembrane segments (helical) span residues 8–28 (FPIICFFVAYKFWGIYIATAA), 53–73 (ITLIFILLLGSFTLVFHNAIF), 76–96 (WKPTIVYWIFAIVLFGSHFFG), 121–141 (LSWALFFLILGVLNLFVVYNF), and 149–169 (FKLFGTLVLMLVFILGQAFYI).

The protein belongs to the YciB family.

It is found in the cell inner membrane. In terms of biological role, plays a role in cell envelope biogenesis, maintenance of cell envelope integrity and membrane homeostasis. The sequence is that of Inner membrane-spanning protein YciB from Coxiella burnetii (strain CbuG_Q212) (Coxiella burnetii (strain Q212)).